The sequence spans 133 residues: Thioredoxin-like protein CXXS1 (133 aa).

In terms of domain architecture, Thioredoxin spans 1-120 (MEIQQQKGVG…VKKMVDASAE (120 aa)).

The protein belongs to the thioredoxin family.

The polypeptide is Thioredoxin-like protein CXXS1 (Oryza sativa subsp. japonica (Rice)).